The chain runs to 681 residues: Methionine--tRNA ligase (681 aa).

Residues 14 to 24 (PYANGSIHLGH) carry the 'HIGH' region motif. Residues C145, C148, C158, and C161 each coordinate Zn(2+). The 'KMSKS' region signature appears at 331–335 (KMSKS). K334 contributes to the ATP binding site. The 103-residue stretch at 579 to 681 (TFAAVDLRVA…SGAKPGQRIK (103 aa)) folds into the tRNA-binding domain.

It belongs to the class-I aminoacyl-tRNA synthetase family. MetG type 1 subfamily. In terms of assembly, homodimer. The cofactor is Zn(2+).

The protein resides in the cytoplasm. The catalysed reaction is tRNA(Met) + L-methionine + ATP = L-methionyl-tRNA(Met) + AMP + diphosphate. Is required not only for elongation of protein synthesis but also for the initiation of all mRNA translation through initiator tRNA(fMet) aminoacylation. This Pseudomonas putida (strain W619) protein is Methionine--tRNA ligase.